We begin with the raw amino-acid sequence, 419 residues long: UDP-N-acetylglucosamine 1-carboxyvinyltransferase (419 aa).

22–23 is a binding site for phosphoenolpyruvate; sequence KN. Arginine 93 provides a ligand contact to UDP-N-acetyl-alpha-D-glucosamine. Cysteine 117 serves as the catalytic Proton donor. The residue at position 117 (cysteine 117) is a 2-(S-cysteinyl)pyruvic acid O-phosphothioketal. Positions 307 and 329 each coordinate UDP-N-acetyl-alpha-D-glucosamine.

Belongs to the EPSP synthase family. MurA subfamily.

Its subcellular location is the cytoplasm. The catalysed reaction is phosphoenolpyruvate + UDP-N-acetyl-alpha-D-glucosamine = UDP-N-acetyl-3-O-(1-carboxyvinyl)-alpha-D-glucosamine + phosphate. It functions in the pathway cell wall biogenesis; peptidoglycan biosynthesis. Cell wall formation. Adds enolpyruvyl to UDP-N-acetylglucosamine. The protein is UDP-N-acetylglucosamine 1-carboxyvinyltransferase of Shewanella sp. (strain MR-7).